A 739-amino-acid chain; its full sequence is Sulfate transporter (739 aa).

The tract at residues 1–27 (MSSESKEQHNVSPRDSAEGNDSYPSGI) is disordered. S12 and S16 each carry phosphoserine. 2 helical membrane passes run 112–132 (VMSGLIVGILLVPQSIAYSLL) and 137–157 (PVYGLYTSFFASIIYFLLGTS). N199 and N205 each carry an N-linked (GlcNAc...) asparagine glycan. A run of 2 helical transmembrane segments spans residues 219 to 239 (IMVGSTVTFIAGVYQVAMGFF) and 242 to 262 (GFVSVYLSDALLSGFVTGASF). N357 carries an N-linked (GlcNAc...) asparagine glycan. The next 4 helical transmembrane spans lie at 378–398 (LIPSVAVDAIAISIIGFAITV), 420–440 (AIGFCNIIPSFFHCFTTSAAL), 455–475 (LSGVVTALVLLLVLLVIAPLF), and 524–544 (LLSTEIGLLVGVCFSIFCVIL). The STAS domain maps to 568–719 (AYKNLQIKPG…YSVYEAMAFA (152 aa)).

The protein belongs to the SLC26A/SulP transporter (TC 2.A.53) family. Post-translationally, N-glycosylated. Ubiquitously expressed.

It is found in the cell membrane. The protein localises to the apical cell membrane. It carries out the reaction oxalate(in) + sulfate(out) = oxalate(out) + sulfate(in). The catalysed reaction is sulfate(out) + 2 chloride(in) = sulfate(in) + 2 chloride(out). It catalyses the reaction oxalate(out) + 2 chloride(in) = oxalate(in) + 2 chloride(out). The enzyme catalyses bromide(in) + chloride(out) = bromide(out) + chloride(in). It carries out the reaction nitrate(in) + chloride(out) = nitrate(out) + chloride(in). The catalysed reaction is iodide(in) + chloride(out) = iodide(out) + chloride(in). Its activity is regulated as follows. An extracellular acidic pH inhibits chloride-sulfate and chloride-oxalate exchange activity whereas an intracellular acidic pH activates chloride-sulfate exchange with no effect on chloride-oxalate exchange activity. Its function is as follows. Sulfate transporter which mediates sulfate uptake into chondrocytes in order to maintain adequate sulfation of proteoglycans which is needed for cartilage development. Mediates electroneutral anion exchange of sulfate ions for oxalate ions and of sulfate and oxalate ions for chloride ions. Mediates exchange of sulfate and oxalate ions for hydroxyl ions and of chloride ions for bromide, iodide and nitrate ions. The coupling of sulfate transport to both hydroxyl and chloride ions likely serves to ensure transport at both acidic pH when most sulfate uptake is mediated by sulfate-hydroxide exchange and alkaline pH when most sulfate uptake is mediated by sulfate-chloride exchange. Essential for chondrocyte proliferation, differentiation and cell size expansion. The chain is Sulfate transporter (SLC26A2) from Homo sapiens (Human).